Reading from the N-terminus, the 264-residue chain is Small ribosomal subunit protein uS2 (264 aa).

Over residues 243–253 (IEAAEDGEEVD) the composition is skewed to acidic residues. Residues 243–264 (IEAAEDGEEVDNAQLTSSQGRS) are disordered. Residues 255–264 (AQLTSSQGRS) show a composition bias toward polar residues.

It belongs to the universal ribosomal protein uS2 family.

This Deinococcus geothermalis (strain DSM 11300 / CIP 105573 / AG-3a) protein is Small ribosomal subunit protein uS2.